A 525-amino-acid chain; its full sequence is Ent-kaurene oxidase (525 aa).

Residues 31-51 (VHWLIYVAFGAWLCSYVIHVL) traverse the membrane as a helical segment. A heme-binding site is contributed by C466.

This sequence belongs to the cytochrome P450 family. The cofactor is heme.

The protein localises to the membrane. The catalysed reaction is ent-kaur-16-ene + 3 reduced [NADPH--hemoprotein reductase] + 3 O2 = ent-kaur-16-en-19-oate + 3 oxidized [NADPH--hemoprotein reductase] + 4 H2O + 4 H(+). It participates in plant hormone biosynthesis; gibberellin biosynthesis. In terms of biological role, catalyzes three successive oxidations of the 4-methyl group of ent-kaurene giving kaurenoic acid, a key step in gibberellin (GA) biosynthesis. This chain is Ent-kaurene oxidase (CYP503A1), found in Gibberella intermedia (Bulb rot disease fungus).